Consider the following 200-residue polypeptide: Ras-related protein Rab-7b (200 aa).

GTP-binding positions include 15 to 22 (GALGVGKT), 34 to 40 (YEDYQTT), 63 to 67 (DTGGQ), 124 to 127 (NKID), and 154 to 155 (AK). 2 short sequence motifs (switch) span residues 28–41 (YVHK…QTTL) and 67–82 (QERF…KGSD). S186 is modified (phosphoserine). 2 S-geranylgeranyl cysteine lipidation sites follow: C199 and C200.

This sequence belongs to the small GTPase superfamily. Rab family.

The protein localises to the late endosome. Its subcellular location is the lysosome. It localises to the golgi apparatus. It is found in the trans-Golgi network. The protein resides in the cytoplasmic vesicle. The protein localises to the phagosome. Its subcellular location is the phagosome membrane. Controls vesicular trafficking from endosomes to the trans-Golgi network (TGN). Acts as a negative regulator of TLR9 signaling and can suppress TLR9-triggered TNFA, IL6, and IFNB production in macrophages by promoting TLR9 lysosomal degradation. Also negatively regulates TLR4 signaling in macrophages by promoting lysosomal degradation of TLR4. Promotes megakaryocytic differentiation by increasing NF-kappa-B-dependent IL6 production and subsequently enhancing the association of STAT3 with GATA1. Not involved in the regulation of the EGF- and EGFR degradation pathway. The chain is Ras-related protein Rab-7b (RAB7B) from Bos taurus (Bovine).